Reading from the N-terminus, the 101-residue chain is Small ribosomal subunit protein uS14 (101 aa).

It belongs to the universal ribosomal protein uS14 family. As to quaternary structure, part of the 30S ribosomal subunit. Contacts proteins S3 and S10.

In terms of biological role, binds 16S rRNA, required for the assembly of 30S particles and may also be responsible for determining the conformation of the 16S rRNA at the A site. The sequence is that of Small ribosomal subunit protein uS14 from Burkholderia multivorans (strain ATCC 17616 / 249).